The following is a 198-amino-acid chain: Molybdenum cofactor guanylyltransferase (198 aa).

Residues L14–G16, K27, D73, and D103 contribute to the GTP site. D103 provides a ligand contact to Mg(2+).

This sequence belongs to the MobA family. As to quaternary structure, monomer. The cofactor is Mg(2+).

It localises to the cytoplasm. The catalysed reaction is Mo-molybdopterin + GTP + H(+) = Mo-molybdopterin guanine dinucleotide + diphosphate. Transfers a GMP moiety from GTP to Mo-molybdopterin (Mo-MPT) cofactor (Moco or molybdenum cofactor) to form Mo-molybdopterin guanine dinucleotide (Mo-MGD) cofactor. The polypeptide is Molybdenum cofactor guanylyltransferase (Pseudomonas aeruginosa (strain ATCC 15692 / DSM 22644 / CIP 104116 / JCM 14847 / LMG 12228 / 1C / PRS 101 / PAO1)).